The sequence spans 654 residues: Fructose-1,6-bisphosphatase class 3 (654 aa).

Belongs to the FBPase class 3 family. The cofactor is Mn(2+).

It catalyses the reaction beta-D-fructose 1,6-bisphosphate + H2O = beta-D-fructose 6-phosphate + phosphate. Its pathway is carbohydrate biosynthesis; gluconeogenesis. The sequence is that of Fructose-1,6-bisphosphatase class 3 from Staphylococcus epidermidis (strain ATCC 35984 / DSM 28319 / BCRC 17069 / CCUG 31568 / BM 3577 / RP62A).